The primary structure comprises 135 residues: MLSPKRTRFRKQHRGRMRGISYRGNRICFGKYALQALEPAWITSRQIEAGRRAMTRNVRRGGKTWVRIFPDKPVTLRAAETRMGSGKGNPEYWVAVVKPGRILYEMGGVAENIARKAISIAASKMPIRTQFIISG.

This sequence belongs to the universal ribosomal protein uL16 family. Part of the 50S ribosomal subunit.

Its subcellular location is the plastid. The protein localises to the chloroplast. The sequence is that of Large ribosomal subunit protein uL16c from Oenothera argillicola (Appalachian evening primrose).